A 405-amino-acid polypeptide reads, in one-letter code: S-adenosylmethionine synthase (405 aa).

141–146 contributes to the ATP binding site; that stretch reads GQGSVD.

This sequence belongs to the AdoMet synthase 2 family. Mg(2+) is required as a cofactor.

The catalysed reaction is L-methionine + ATP + H2O = S-adenosyl-L-methionine + phosphate + diphosphate. The protein operates within amino-acid biosynthesis; S-adenosyl-L-methionine biosynthesis; S-adenosyl-L-methionine from L-methionine: step 1/1. In terms of biological role, catalyzes the formation of S-adenosylmethionine from methionine and ATP. In Methanococcus maripaludis (strain C7 / ATCC BAA-1331), this protein is S-adenosylmethionine synthase.